The following is a 497-amino-acid chain: Glycerol kinase (497 aa).

Threonine 13 lines the ADP pocket. Residues threonine 13, threonine 14, and serine 15 each contribute to the ATP site. Threonine 13 contributes to the sn-glycerol 3-phosphate binding site. Position 17 (arginine 17) interacts with ADP. Arginine 83, glutamate 84, and tyrosine 135 together coordinate sn-glycerol 3-phosphate. The glycerol site is built by arginine 83, glutamate 84, and tyrosine 135. Histidine 231 is subject to Phosphohistidine; by HPr. Aspartate 245 contacts sn-glycerol 3-phosphate. 2 residues coordinate glycerol: aspartate 245 and glutamine 246. Positions 267 and 310 each coordinate ADP. 4 residues coordinate ATP: threonine 267, glycine 310, glutamine 314, and glycine 411. Residues glycine 411 and asparagine 415 each contribute to the ADP site.

It belongs to the FGGY kinase family. As to quaternary structure, homotetramer and homodimer (in equilibrium). Post-translationally, the phosphoenolpyruvate-dependent sugar phosphotransferase system (PTS), including enzyme I, and histidine-containing protein (HPr) are required for the phosphorylation, which leads to the activation of the enzyme.

It catalyses the reaction glycerol + ATP = sn-glycerol 3-phosphate + ADP + H(+). Its pathway is polyol metabolism; glycerol degradation via glycerol kinase pathway; sn-glycerol 3-phosphate from glycerol: step 1/1. Activated by phosphorylation and inhibited by fructose 1,6-bisphosphate (FBP). Its function is as follows. Key enzyme in the regulation of glycerol uptake and metabolism. Catalyzes the phosphorylation of glycerol to yield sn-glycerol 3-phosphate. This chain is Glycerol kinase, found in Listeria monocytogenes serovar 1/2a (strain ATCC BAA-679 / EGD-e).